We begin with the raw amino-acid sequence, 484 residues long: Cysteine--tRNA ligase (484 aa).

Position 29 (Cys-29) interacts with Zn(2+). Residues 31-41 (PTVQSAPHIGH) carry the 'HIGH' region motif. Residues Cys-219, His-244, and Glu-248 each contribute to the Zn(2+) site. The 'KMSKS' region signature appears at 275-279 (KMSKS). An ATP-binding site is contributed by Lys-278.

Belongs to the class-I aminoacyl-tRNA synthetase family. Monomer. Zn(2+) is required as a cofactor.

It is found in the cytoplasm. It carries out the reaction tRNA(Cys) + L-cysteine + ATP = L-cysteinyl-tRNA(Cys) + AMP + diphosphate. This Clavibacter michiganensis subsp. michiganensis (strain NCPPB 382) protein is Cysteine--tRNA ligase.